The chain runs to 946 residues: Zinc finger protein rotund (946 aa).

Disordered stretches follow at residues 10 to 30 (GPQL…GHSD) and 156 to 269 (FRKP…HNLN). The segment covering 161–176 (NNNGYSWSTGNNNEVV) has biased composition (polar residues). Low complexity predominate over residues 177 to 188 (SHSSNGHTNNHP). 2 stretches are compositionally biased toward polar residues: residues 198–230 (ASAT…SIKS) and 242–269 (TCKS…HNLN). 6 consecutive C2H2-type zinc fingers follow at residues 488–510 (YQCK…TQIH), 517–539 (YKCT…TRIH), 545–567 (YRCE…IRTH), 573–597 (YKCR…SRCH), 603–625 (FKCN…IPKH), and 634–656 (HICQ…MQKH). Positions 683 to 853 (GGSANPANGP…TPSAVGPYDA (171 aa)) are disordered. Composition is skewed to low complexity over residues 739 to 762 (HQQQ…QQQQ) and 770 to 790 (HGVP…QQQQ). A compositionally biased stretch (polar residues) spans 813 to 822 (TAPNGSQSNG). Residues 828 to 841 (QPHHRMPDPVREDI) show a composition bias toward basic and acidic residues.

This sequence belongs to the krueppel C2H2-type zinc-finger protein family. Interacts with nab; which acts as a corepressor. Isoform rn and isoform roe are expressed in non-overlapping domains in the larval imaginal disks. Isoform rn is first expressed during the early third larval instar in the leg, wing, haltere and antennal part of the eye-antennal imaginal disk. It is observed as a ring in the leg and antenna disks and in the presumptive wing pouch and capitellum of wing and haltere disks respectively. In wing disk it is expressed in 3 concentric domains in the wing pouch. In late third instar, expression of isoform rn in the leg disk is no longer evident, but is maintained in the other disks. Isoform roe appears in the third instar and is confined to the eye part of the eye-antennal imaginal disk in a band of 4-6 cells at the morphogenetic furrow. There is no evidence of roe expression in other imaginal disks.

It localises to the nucleus. Its function is as follows. Transcription factor involved in imaginal disks development. Isoform rn is required in the wings, antenna, haltere, proboscis and legs disks, while isoform roe is required in the eye disk. Together with nab corepressor, it is involved in the initiation and maintenance of wingless (wg) expression in the wing hinge, by limiting the expression of wg to this compartment. Also required for the epithelial-mesenchymal transition branch of basolateral junctions signaling. The protein is Zinc finger protein rotund of Drosophila melanogaster (Fruit fly).